We begin with the raw amino-acid sequence, 261 residues long: Thiamine thiazole synthase (261 aa).

NAD(+) is bound by residues Ser40, 59–60, Gly67, Val133, and 159–161; these read ER and HID. Positions 161 and 176 each coordinate Fe cation. Positions 179 and 226 each coordinate NAD(+). Arg236 lines the glycine pocket.

This sequence belongs to the THI4 family. Homooctamer; tetramer of dimers. Requires Fe(2+) as cofactor.

It carries out the reaction hydrogen sulfide + glycine + NAD(+) = ADP-5-ethyl-4-methylthiazole-2-carboxylate + nicotinamide + 3 H2O + H(+). It participates in cofactor biosynthesis; thiamine diphosphate biosynthesis. In terms of biological role, involved in the biosynthesis of the thiazole moiety of thiamine. Catalyzes the conversion of NAD and glycine to adenosine diphosphate 5-(2-hydroxyethyl)-4-methylthiazole-2-carboxylate (ADT), an adenylated thiazole intermediate, using free sulfide as a source of sulfur. This Methanococcus maripaludis (strain C6 / ATCC BAA-1332) protein is Thiamine thiazole synthase.